A 1697-amino-acid chain; its full sequence is UDP-sugar-dependent glycosyltransferase 52 (1697 aa).

Disordered regions lie at residues 20-40 (HSDS…NYEN) and 142-166 (STDL…LMIP). The region spanning 234–332 (DYVLENYLYK…WYHEINRMQK (99 aa)) is the PH domain. Disordered stretches follow at residues 573-645 (FRSK…TTHE) and 707-756 (PLDK…KQSQ). Low complexity-rich tracts occupy residues 584–628 (QNSQ…SSSA) and 711–722 (QQQQQQQQQQQQ). 2 consecutive GRAM domains span residues 658 to 793 (STFH…TKER) and 881 to 948 (IKIK…KKYS). The segment covering 739-749 (TDSDTDSESDF) has biased composition (acidic residues). Disordered stretches follow at residues 1011–1047 (SPSI…IHST), 1062–1085 (DGEN…SNSF), 1110–1130 (SAQQ…STTT), and 1466–1488 (EHNN…SNKS). 4 stretches are compositionally biased toward low complexity: residues 1026–1047 (PPSS…IHST), 1065–1084 (NNSN…KSNS), 1112–1130 (QQQQ…STTT), and 1469–1479 (NNNNNNNNNNN). An FYVE-type zinc finger spans residues 1622–1685 (SSAPNSCMGC…VCDKCFNDLQ (64 aa)). Positions 1628, 1631, 1647, 1650, 1655, 1658, 1677, and 1680 each coordinate Zn(2+).

The protein belongs to the glycosyltransferase 28 family.

The catalysed reaction is a sterol + UDP-alpha-D-glucose = a sterol 3-beta-D-glucoside + UDP + H(+). Its function is as follows. Involved in the biosynthesis of sterol glucoside. Can use different sterols such as cholesterol, sitosterol, and ergosterol as sugar acceptors. This Dictyostelium discoideum (Social amoeba) protein is UDP-sugar-dependent glycosyltransferase 52 (ugt52).